Consider the following 1131-residue polypeptide: Protein DWARF 53 (1131 aa).

The Clp R domain maps to 8-181 (ARQCLSPAAV…KLAILRPAPP (174 aa)). 2 repeat regions span residues 12–85 (LSPA…LDRL) and 103–181 (VSNS…PAPP). The tract at residues 511–574 (NRDPYKPFPR…ISSPSVTNKR (64 aa)) is disordered. Low complexity predominate over residues 558-569 (SSSTARPISSPS). The short motif at 578–582 (LVLNL) is the EAR 1 element. The tract at residues 588–655 (KSDENLQERG…KRVEDSERSV (68 aa)) is disordered. The segment covering 597–609 (GMQSQHGTLSNVD) has biased composition (polar residues). The span at 646-655 (KRVEDSERSV) shows a compositional bias: basic and acidic residues. The EAR 2 motif lies at 799–803 (LDLNL). Disordered regions lie at residues 951–970 (ISDD…RLHR) and 976–1002 (FDLN…NSYG). The short motif at 976–981 (FDLNLP) is the EAR 3 element. Over residues 982 to 993 (VDEDEPLDADDD) the composition is skewed to acidic residues.

The protein belongs to the ClpA/ClpB family. Interacts with D3. Interacts with D14. The interaction with D14 is enhanced in the presence of strigolactones. The interaction with D14 occurs in the presence of (2'R) stereoisomers of strigolactones, but not (2'S) stereoisomers. Interacts with the TOPLESS-related proteins TPR1, TPR2 and TPR3. Interacts with SPL14/IPA1. Post-translationally, polyubiquitinated. Strigolactone, but not karrikin, triggers rapid SCF(D3)-dependent degradation via the proteasome. Expressed in the shoot bases of seedlings, young leaves, axillary buds and young panicles. Expressed in young roots vasculature, culms, internodes and nodes, preferentially in the parenchyma cells surrounding the xylem.

It is found in the nucleus. In terms of biological role, repressor of strigolactones (SL) signaling. Subjected to a negative feedback control of SL signaling. Suppresses the transcriptional activation activity of SPL14/IPA1 in SL signaling. Acts with SPL14/IPA1 to mediate the SL-regulated tiller development. Subject to a negative feedback regulation by SPL14/IPA1, which binds to D53 promoter to repress D53 gene expression. In Oryza sativa subsp. japonica (Rice), this protein is Protein DWARF 53.